The chain runs to 177 residues: Nucleoside triphosphate/diphosphate phosphatase (177 aa).

The active-site Proton donor is arginine 24. 6 residues coordinate Mg(2+): asparagine 88, aspartate 104, aspartate 106, aspartate 108, aspartate 121, and glutamate 124.

This sequence belongs to the Ntdp family. Mg(2+) is required as a cofactor.

It carries out the reaction a ribonucleoside 5'-triphosphate + H2O = a ribonucleoside 5'-diphosphate + phosphate + H(+). It catalyses the reaction a ribonucleoside 5'-diphosphate + H2O = a ribonucleoside 5'-phosphate + phosphate + H(+). Has nucleoside phosphatase activity towards nucleoside triphosphates and nucleoside diphosphates. The protein is Nucleoside triphosphate/diphosphate phosphatase of Geobacillus sp. (strain WCH70).